The chain runs to 313 residues: Ribosomal RNA small subunit methyltransferase H (313 aa).

Residues 36–38 (GGH), Asp56, Phe80, Asp102, and Gln109 contribute to the S-adenosyl-L-methionine site.

Belongs to the methyltransferase superfamily. RsmH family.

The protein resides in the cytoplasm. The catalysed reaction is cytidine(1402) in 16S rRNA + S-adenosyl-L-methionine = N(4)-methylcytidine(1402) in 16S rRNA + S-adenosyl-L-homocysteine + H(+). Functionally, specifically methylates the N4 position of cytidine in position 1402 (C1402) of 16S rRNA. This Actinobacillus pleuropneumoniae serotype 3 (strain JL03) protein is Ribosomal RNA small subunit methyltransferase H.